The chain runs to 1165 residues: DNA-directed RNA polymerase subunit beta (1165 aa).

The protein belongs to the RNA polymerase beta chain family. In terms of assembly, the RNAP catalytic core consists of 2 alpha, 1 beta, 1 beta' and 1 omega subunit. When a sigma factor is associated with the core the holoenzyme is formed, which can initiate transcription.

It catalyses the reaction RNA(n) + a ribonucleoside 5'-triphosphate = RNA(n+1) + diphosphate. Its function is as follows. DNA-dependent RNA polymerase catalyzes the transcription of DNA into RNA using the four ribonucleoside triphosphates as substrates. In Leifsonia xyli subsp. xyli (strain CTCB07), this protein is DNA-directed RNA polymerase subunit beta.